We begin with the raw amino-acid sequence, 140 residues long: Profilin-2 (140 aa).

Position 2 is an N-acetylalanine (Ala2).

This sequence belongs to the profilin family. As to quaternary structure, occurs in many kinds of cells as a complex with monomeric actin in a 1:1 ratio. Interacts with PFN2. Interacts with ACTMAP (via N-terminus); the interaction may facilitate efficient cleavage of the acetylated N-terminus of immature actin by ACTMAP. In terms of tissue distribution, highly expressed in brain, skeletal muscle and kidney and less strongly in heart, placenta, lung and liver.

It is found in the cytoplasm. The protein resides in the cytoskeleton. In terms of biological role, binds to actin and affects the structure of the cytoskeleton. At high concentrations, profilin prevents the polymerization of actin, whereas it enhances it at low concentrations. By binding to PIP2, it inhibits the formation of IP3 and DG. In Homo sapiens (Human), this protein is Profilin-2 (PFN2).